The chain runs to 311 residues: Vomeronasal type-1 receptor 3 (311 aa).

The Extracellular segment spans residues 1 to 5 (MASKD). The helical transmembrane segment at 6-26 (FAIGMILLSQIMVGFLGNFFL) threads the bilayer. Residues 27–51 (LYHYSFLCFTRGMLQSTDLILKHLT) lie on the Cytoplasmic side of the membrane. A helical membrane pass occupies residues 52–72 (IANSLVILSKGIPQTMAAFGL). At 73-92 (KDSLSDIGCKFVFYVHRVGR) the chain is on the extracellular side. The helical transmembrane segment at 93-113 (AVCVGNACLLSVFQVITISPS) threads the bilayer. The Cytoplasmic segment spans residues 114-130 (EFRWAELKLHAHKYIRS). Residues 131 to 151 (FILVLCWILNTLVNITVLLHV) form a helical membrane-spanning segment. Residues 152–187 (TGKWNSINSTKTNDYGYCSGGSRSRIPHSLHIVLLS) lie on the Extracellular side of the membrane. An N-linked (GlcNAc...) asparagine glycan is attached at Asn159. A helical transmembrane segment spans residues 188–208 (SLDVLCLGLMTLASGSMVFIL). The Cytoplasmic portion of the chain corresponds to 209–232 (HRHKQQVQHIHGTNLSARSSPESR). Residues 233–249 (VTQSILVLVSTLCYFTR) form a helical membrane-spanning segment. Over 250–264 (SPPSLHMSLFPNPSW) the chain is Extracellular. A helical transmembrane segment spans residues 265 to 285 (WLLNTSALITACFPMVSPFVL). The Cytoplasmic segment spans residues 286 to 311 (MSRHPRIPRLGSACCGRNPQFPKLVR).

This sequence belongs to the G-protein coupled receptor 1 family.

It localises to the cell membrane. Functionally, putative pheromone receptor. The polypeptide is Vomeronasal type-1 receptor 3 (VN1R3) (Homo sapiens (Human)).